Here is a 522-residue protein sequence, read N- to C-terminus: Sorting nexin-1 (522 aa).

A disordered region spans residues 1–142 (MASGGGGCSA…ELEEEEQEDQ (142 aa)). Phosphoserine is present on residues Ser-32 and Ser-39. The segment covering 35 to 45 (EAGDSDTEGED) has biased composition (acidic residues). Phosphothreonine occurs at positions 41 and 48. Over residues 55-65 (KPQSPKKTTSL) the composition is skewed to polar residues. 2 positions are modified to phosphoserine: Ser-58 and Ser-72. Over residues 71–80 (GSKENGIHEE) the composition is skewed to basic and acidic residues. Residues 98–107 (LDSTQNNQKT) show a composition bias toward polar residues. The segment covering 132–142 (EELEEEEQEDQ) has biased composition (acidic residues). The PX domain maps to 143–272 (FDLTVGITDP…EFLEKEELPR (130 aa)). Positions 186, 188, and 214 each coordinate a 1,2-diacyl-sn-glycero-3-phospho-(1D-myo-inositol-3-phosphate). Ser-188 carries the post-translational modification Phosphoserine. Lys-237 carries the N6-acetyllysine modification. A 1,2-diacyl-sn-glycero-3-phospho-(1D-myo-inositol-3-phosphate) is bound at residue Arg-238. Ser-280 carries the phosphoserine modification. Positions 281–298 (GAGLLKMFNKATDAVSKM) are membrane-binding amphipathic helix. The BAR domain maps to 302-522 (MNESDIWFEE…AFLPEARAIS (221 aa)).

This sequence belongs to the sorting nexin family. In terms of assembly, predominantly forms heterodimers with BAR domain-containing sorting nexins SNX5, SNX6 and SNX32; can self-associate to form homodimers. The heterodimers are proposed to self-assemble into helical arrays on the membrane to stabilize and expand local membrane curvature underlying endosomal tubule formation. Thought to be a component of the originally described retromer complex (also called SNX-BAR retromer) which is a pentamer containing the heterotrimeric retromer cargo-selective complex (CSC), also described as vacuolar protein sorting subcomplex (VPS) and a heterodimeric membrane-deforming subcomplex formed between SNX1 or SNX2 and SNX5 or SNX6 (also called SNX-BAR subcomplex); the respective CSC and SNX-BAR subcomplexes associate with low affinity. Interacts with SNX5, SNX6, SNX32, VPS26A, VPS29, VPS35, DRD5, DENND5A, KALRN, RHOG (GDP-bound form). The interaction with SNX2 is reported controversially. Interacts with DNAJC13; prevented by presence of HGS. Interacts with HGS.

The protein resides in the endosome membrane. It localises to the golgi apparatus. It is found in the trans-Golgi network membrane. The protein localises to the early endosome membrane. Its subcellular location is the cell projection. The protein resides in the lamellipodium. In terms of biological role, involved in several stages of intracellular trafficking. Interacts with membranes containing phosphatidylinositol 3-phosphate (PtdIns(3P)) or phosphatidylinositol 3,5-bisphosphate (PtdIns(3,5)P2). Acts in part as component of the retromer membrane-deforming SNX-BAR subcomplex. The SNX-BAR retromer mediates retrograde transport of cargo proteins from endosomes to the trans-Golgi network (TGN) and is involved in endosome-to-plasma membrane transport for cargo protein recycling. The SNX-BAR subcomplex functions to deform the donor membrane into a tubular profile called endosome-to-TGN transport carrier (ETC). Can sense membrane curvature and has in vitro vesicle-to-membrane remodeling activity. Involved in retrograde endosome-to-TGN transport of lysosomal enzyme receptors (IGF2R, M6PR and SORT1). Plays a role in targeting ligand-activated EGFR to the lysosomes for degradation after endocytosis from the cell surface and release from the Golgi. Involvement in retromer-independent endocytic trafficking of P2RY1 and lysosomal degradation of protease-activated receptor-1/F2R. Promotes KALRN- and RHOG-dependent but retromer-independent membrane remodeling such as lamellipodium formation; the function is dependent on GEF activity of KALRN. Required for endocytosis of DRD5 upon agonist stimulation but not for basal receptor trafficking. The protein is Sorting nexin-1 (Snx1) of Rattus norvegicus (Rat).